The primary structure comprises 301 residues: Tegument protein VP22 (301 aa).

The tract at residues 1 to 171 (MTSRRSVKSG…PTRSKTPAQG (171 aa)) is disordered. A compositionally biased stretch (low complexity) spans 113–124 (RTPTTAPRAPRT). Positions 163-166 (TRSK) match the Nuclear localization signal motif. The interaction with gE stretch occupies residues 174–267 (RKLHFSTAPP…LVNPDVVQDV (94 aa)). The Nuclear export signal signature appears at 232 to 244 (LNELLGITTIRVT). The span at 269-281 (AATATRGRSAASR) shows a compositional bias: low complexity. Residues 269–301 (AATATRGRSAASRPTERPRAPARSASRPRRPVE) are disordered.

Belongs to the alphaherpesvirinae VP22 tegument protein family. Interacts with gE (via C-terminus); this interaction is necessary for the recruitment of VP22 to the Golgi and its packaging into virions. Interacts with gM (via C-terminus). Interacts with VP16; this interaction allows the formation of a tripartite complex composed of VP16, VP22 and UL41/VHS. According to a report interacts with gD (via C-terminus). According another publication, does not interact with gD. Interacts with host CGAS. Interacts with host SET; this interaction may interfere with SET-mediated nucleosomal deposition onto the viral genome. Interacts with the capsid-binding protein UL16. Post-translationally, highly phosphorylated in the host cell. Packaging is selective for underphosphorylated forms.

It is found in the virion tegument. The protein resides in the host cytoplasm. It localises to the host nucleus. Its subcellular location is the host Golgi apparatus. Its function is as follows. Tegument protein that plays different roles during the time course of infection. Participates in both the accumulation of viral mRNAs and viral protein translation at late time of infection. Modulates the RNase activity of the virion host shutoff protein UL41 probably to ensure necessary levels of key cellular mRNAs and proteins. Plays a role in microtubule reorganization that occurs after viral infection by stabilizing microtubule network. Finally, may prevent nucleosomal deposition onto the viral genome by interacting with and inhibiting host SET. Plays a role in the inhibition of host innate immune system by targeting the CGAS enzymatic activity which is the principal cytosolic DNA sensor that detects invading viral DNA. Acts by mediating disruption of liquid-like droplets in which CGAS is activated, thereby preventing CGAS activity. This Human herpesvirus 1 (strain 17) (HHV-1) protein is Tegument protein VP22.